A 346-amino-acid polypeptide reads, in one-letter code: Probable dual-specificity RNA methyltransferase RlmN (346 aa).

The active-site Proton acceptor is Glu91. One can recognise a Radical SAM core domain in the interval Thr97–Glu325. An intrachain disulfide couples Cys104 to Cys330. Residues Cys111, Cys115, and Cys118 each coordinate [4Fe-4S] cluster. Residues Gly158–Glu159, Ser188, Ser211–His213, and Asn287 each bind S-adenosyl-L-methionine. Cys330 acts as the S-methylcysteine intermediate in catalysis.

The protein belongs to the radical SAM superfamily. RlmN family. [4Fe-4S] cluster serves as cofactor.

The protein resides in the cytoplasm. It catalyses the reaction adenosine(2503) in 23S rRNA + 2 reduced [2Fe-2S]-[ferredoxin] + 2 S-adenosyl-L-methionine = 2-methyladenosine(2503) in 23S rRNA + 5'-deoxyadenosine + L-methionine + 2 oxidized [2Fe-2S]-[ferredoxin] + S-adenosyl-L-homocysteine. It carries out the reaction adenosine(37) in tRNA + 2 reduced [2Fe-2S]-[ferredoxin] + 2 S-adenosyl-L-methionine = 2-methyladenosine(37) in tRNA + 5'-deoxyadenosine + L-methionine + 2 oxidized [2Fe-2S]-[ferredoxin] + S-adenosyl-L-homocysteine. In terms of biological role, specifically methylates position 2 of adenine 2503 in 23S rRNA and position 2 of adenine 37 in tRNAs. This Picosynechococcus sp. (strain ATCC 27264 / PCC 7002 / PR-6) (Agmenellum quadruplicatum) protein is Probable dual-specificity RNA methyltransferase RlmN.